A 295-amino-acid chain; its full sequence is Polyadenylate-binding protein 2-B (295 aa).

A disordered region spans residues 1–102; the sequence is MAAVSSVASL…EEPGELTGDQ (102 aa). 2 stretches are compositionally biased toward gly residues: residues 19–31 and 71–81; these read LRGG…GGQD and GRGGSGGGAGG. Positions 83 to 96 are enriched in acidic residues; the sequence is EELEDEELEEEEPG. Positions 106-140 form a coiled coil; sequence DPELEAIKARVREMEEEAEKLKELQNEVEKQMNMS. The segment at 145–295 is necessary for homooligomerization; the sequence is NAGPVIMSVE…ARATSWYTPY (151 aa). One can recognise an RRM domain in the interval 162–239; that stretch reads RSIYVGNVDY…RQIKVVPKRT (78 aa).

As to quaternary structure, monomer and homooligomer. Binds RNA as a monomer and oligomerizes when bound to poly(A).

The protein localises to the nucleus. Its subcellular location is the cytoplasm. Its function is as follows. Involved in the 3'-end formation of mRNA precursors (pre-mRNA) by the addition of a poly(A) tail of 200-250 nt to the upstream cleavage product. Stimulates poly(A) polymerase (PAPOLA) conferring processivity on the poly(A) tail elongation reaction and also controls the poly(A) tail length. Increases the affinity of poly(A) polymerase for RNA. Binds to poly(A) and to poly(G) with high affinity. May protect the poly(A) tail from degradation. The sequence is that of Polyadenylate-binding protein 2-B (pabpn1-b) from Xenopus laevis (African clawed frog).